An 809-amino-acid polypeptide reads, in one-letter code: TPR repeat-containing protein TP_0920 (809 aa).

Positions 103–125 (PGEARALPNSEQPEVPASLDSTS) are disordered. 9 TPR repeats span residues 315 to 348 (LREY…DPHC), 383 to 416 (AFLS…DPHQ), 418 to 450 (LFAL…FLAQ), 471 to 504 (TEVR…GSAD), 513 to 550 (LLLR…APDC), 552 to 582 (LYHF…DPDN), 583 to 616 (GWLH…LPHE), 656 to 689 (GQAF…EPQN), and 723 to 756 (AHVY…WPQC).

The chain is TPR repeat-containing protein TP_0920 from Treponema pallidum (strain Nichols).